A 340-amino-acid polypeptide reads, in one-letter code: Cytochrome c oxidase subunit 1 (340 aa).

Residues 18 to 38 (MCYLLVAILCGFLGYIYSLFI) traverse the membrane as a helical segment. 2 residues coordinate Ca(2+): E41 and G46. The helical transmembrane segment at 42–62 (LSIIGCGVLFGDYQYYNVLVT) threads the bilayer. H64 provides a ligand contact to Fe(II)-heme a. 7 consecutive transmembrane segments (helical) span residues 66 to 86 (LVMV…NYFV), 100 to 120 (LNNM…SGLL), 148 to 168 (FTVF…INLL), 186 to 206 (LFIW…PVLA), 237 to 257 (LFWF…FGLI), 279 to 299 (MILI…VVGM), and 305 to 325 (AYFG…LFNW). Position 243 (H243) interacts with Cu cation. Residues 243 to 247 (HPEVY) constitute a cross-link (1'-histidyl-3'-tyrosine (His-Tyr)). Y247 serves as a coordination point for O2. H292 and H293 together coordinate Cu cation.

The protein belongs to the heme-copper respiratory oxidase family. In terms of assembly, component of the cytochrome c oxidase (complex IV, CIV), a multisubunit enzyme composed of a catalytic core of 3 subunits and several supernumerary subunits. The complex exists as a monomer or a dimer and forms supercomplexes (SCs) in the inner mitochondrial membrane with ubiquinol-cytochrome c oxidoreductase (cytochrome b-c1 complex, complex III, CIII). The cofactor is heme. It depends on Cu cation as a cofactor.

It is found in the mitochondrion inner membrane. The catalysed reaction is 4 Fe(II)-[cytochrome c] + O2 + 8 H(+)(in) = 4 Fe(III)-[cytochrome c] + 2 H2O + 4 H(+)(out). It functions in the pathway energy metabolism; oxidative phosphorylation. In terms of biological role, component of the cytochrome c oxidase, the last enzyme in the mitochondrial electron transport chain which drives oxidative phosphorylation. The respiratory chain contains 3 multisubunit complexes succinate dehydrogenase (complex II, CII), ubiquinol-cytochrome c oxidoreductase (cytochrome b-c1 complex, complex III, CIII) and cytochrome c oxidase (complex IV, CIV), that cooperate to transfer electrons derived from NADH and succinate to molecular oxygen, creating an electrochemical gradient over the inner membrane that drives transmembrane transport and the ATP synthase. Cytochrome c oxidase is the component of the respiratory chain that catalyzes the reduction of oxygen to water. Electrons originating from reduced cytochrome c in the intermembrane space (IMS) are transferred via the dinuclear copper A center (CU(A)) of subunit 2 and heme A of subunit 1 to the active site in subunit 1, a binuclear center (BNC) formed by heme A3 and copper B (CU(B)). The BNC reduces molecular oxygen to 2 water molecules using 4 electrons from cytochrome c in the IMS and 4 protons from the mitochondrial matrix. In Strigomonas oncopelti (Parasitic flagellate), this protein is Cytochrome c oxidase subunit 1 (COI).